The chain runs to 395 residues: uncharacterized protein (395 aa).

Positions 247 to 270 (GGTVVPPNPDQPNPTPPDSSSPNY) are disordered. Residues 252–265 (PPNPDQPNPTPPDS) are compositionally biased toward pro residues.

This is an uncharacterized protein from Vibrio cholerae serotype O1 (strain ATCC 39315 / El Tor Inaba N16961).